A 120-amino-acid polypeptide reads, in one-letter code: Aspartate 1-decarboxylase (120 aa).

Ser25 (schiff-base intermediate with substrate; via pyruvic acid) is an active-site residue. Residue Ser25 is modified to Pyruvic acid (Ser). Position 57 (Thr57) interacts with substrate. Tyr58 functions as the Proton donor in the catalytic mechanism. Position 73–75 (73–75 (GAA)) interacts with substrate.

The protein belongs to the PanD family. As to quaternary structure, heterooctamer of four alpha and four beta subunits. Pyruvate is required as a cofactor. Is synthesized initially as an inactive proenzyme, which is activated by self-cleavage at a specific serine bond to produce a beta-subunit with a hydroxyl group at its C-terminus and an alpha-subunit with a pyruvoyl group at its N-terminus.

Its subcellular location is the cytoplasm. It catalyses the reaction L-aspartate + H(+) = beta-alanine + CO2. The protein operates within cofactor biosynthesis; (R)-pantothenate biosynthesis; beta-alanine from L-aspartate: step 1/1. In terms of biological role, catalyzes the pyruvoyl-dependent decarboxylation of aspartate to produce beta-alanine. This Cupriavidus necator (strain ATCC 17699 / DSM 428 / KCTC 22496 / NCIMB 10442 / H16 / Stanier 337) (Ralstonia eutropha) protein is Aspartate 1-decarboxylase.